Consider the following 97-residue polypeptide: MKIRPLHDRVIVKRKEAESKSAGGIVLTGSAAGKSTRGTVTAVGNGRILDNGSIKPLDVKVGETVIFNEGYGAKIEKIDNEELLILTESDILAIVEE.

Belongs to the GroES chaperonin family. In terms of assembly, heptamer of 7 subunits arranged in a ring. Interacts with the chaperonin GroEL.

Its subcellular location is the cytoplasm. Together with the chaperonin GroEL, plays an essential role in assisting protein folding. The GroEL-GroES system forms a nano-cage that allows encapsulation of the non-native substrate proteins and provides a physical environment optimized to promote and accelerate protein folding. GroES binds to the apical surface of the GroEL ring, thereby capping the opening of the GroEL channel. This chain is Co-chaperonin GroES, found in Buchnera aphidicola subsp. Geoica urticularia.